A 503-amino-acid polypeptide reads, in one-letter code: UDP-N-acetylmuramate--L-alanine ligase (503 aa).

120–126 (GTHGKTS) lines the ATP pocket.

This sequence belongs to the MurCDEF family.

The protein resides in the cytoplasm. The catalysed reaction is UDP-N-acetyl-alpha-D-muramate + L-alanine + ATP = UDP-N-acetyl-alpha-D-muramoyl-L-alanine + ADP + phosphate + H(+). Its pathway is cell wall biogenesis; peptidoglycan biosynthesis. Cell wall formation. This chain is UDP-N-acetylmuramate--L-alanine ligase, found in Rhodococcus jostii (strain RHA1).